The primary structure comprises 912 residues: Bifunctional uridylyltransferase/uridylyl-removing enzyme (912 aa).

A uridylyltransferase region spans residues 1–369 (MLPRIANQRA…FFASLRSRRK (369 aa)). The segment at 370 to 722 (KVGPFFIEGG…AHWYPARGAT (353 aa)) is uridylyl-removing. Residues 486–608 (VDEHTIRAIG…VQSQERLRLL (123 aa)) form the HD domain. ACT domains are found at residues 723–802 (LVTV…LVPQ) and 834–912 (VIEV…KDAA).

This sequence belongs to the GlnD family. Mg(2+) is required as a cofactor.

The catalysed reaction is [protein-PII]-L-tyrosine + UTP = [protein-PII]-uridylyl-L-tyrosine + diphosphate. It catalyses the reaction [protein-PII]-uridylyl-L-tyrosine + H2O = [protein-PII]-L-tyrosine + UMP + H(+). Its activity is regulated as follows. Uridylyltransferase (UTase) activity is inhibited by glutamine, while glutamine activates uridylyl-removing (UR) activity. Functionally, modifies, by uridylylation and deuridylylation, the PII regulatory proteins (GlnB and homologs), in response to the nitrogen status of the cell that GlnD senses through the glutamine level. Under low glutamine levels, catalyzes the conversion of the PII proteins and UTP to PII-UMP and PPi, while under higher glutamine levels, GlnD hydrolyzes PII-UMP to PII and UMP (deuridylylation). Thus, controls uridylylation state and activity of the PII proteins, and plays an important role in the regulation of nitrogen assimilation and metabolism. The polypeptide is Bifunctional uridylyltransferase/uridylyl-removing enzyme (Novosphingobium aromaticivorans (strain ATCC 700278 / DSM 12444 / CCUG 56034 / CIP 105152 / NBRC 16084 / F199)).